The following is a 67-amino-acid chain: MPARFGKTLIPQPRSRFIKVRCPDCGNEQVTFSHAAMVVRCLVCGRVLAQPTGGKARLAGHVIKVLE.

Positions 22, 25, 41, and 44 each coordinate Zn(2+). The C4-type zinc finger occupies 22 to 44 (CPDCGNEQVTFSHAAMVVRCLVC).

The protein belongs to the eukaryotic ribosomal protein eS27 family. In terms of assembly, part of the 30S ribosomal subunit. Requires Zn(2+) as cofactor.

The sequence is that of Small ribosomal subunit protein eS27 from Pyrobaculum neutrophilum (strain DSM 2338 / JCM 9278 / NBRC 100436 / V24Sta) (Thermoproteus neutrophilus).